The chain runs to 332 residues: ADP-L-glycero-D-manno-heptose-6-epimerase (332 aa).

NADP(+) is bound by residues 13-14, 34-35, Lys-41, Lys-56, 78-82, and Asn-95; these read FI, DN, and EGACS. The active-site Proton acceptor is Tyr-142. Residue Lys-146 participates in NADP(+) binding. Asn-171 provides a ligand contact to substrate. Positions 172 and 180 each coordinate NADP(+). Residue Lys-180 is the Proton acceptor of the active site. Substrate is bound by residues Arg-182, His-189, 203-206, Arg-216, and Tyr-295; that span reads FEGC.

It belongs to the NAD(P)-dependent epimerase/dehydratase family. HldD subfamily. Homopentamer. It depends on NADP(+) as a cofactor.

It catalyses the reaction ADP-D-glycero-beta-D-manno-heptose = ADP-L-glycero-beta-D-manno-heptose. It functions in the pathway nucleotide-sugar biosynthesis; ADP-L-glycero-beta-D-manno-heptose biosynthesis; ADP-L-glycero-beta-D-manno-heptose from D-glycero-beta-D-manno-heptose 7-phosphate: step 4/4. Functionally, catalyzes the interconversion between ADP-D-glycero-beta-D-manno-heptose and ADP-L-glycero-beta-D-manno-heptose via an epimerization at carbon 6 of the heptose. The polypeptide is ADP-L-glycero-D-manno-heptose-6-epimerase (Thiobacillus denitrificans (strain ATCC 25259 / T1)).